Reading from the N-terminus, the 422-residue chain is Histidine--tRNA ligase (422 aa).

The protein belongs to the class-II aminoacyl-tRNA synthetase family. In terms of assembly, homodimer.

The protein resides in the cytoplasm. The enzyme catalyses tRNA(His) + L-histidine + ATP = L-histidyl-tRNA(His) + AMP + diphosphate + H(+). This Vibrio atlanticus (strain LGP32) (Vibrio splendidus (strain Mel32)) protein is Histidine--tRNA ligase.